The sequence spans 357 residues: 3-isopropylmalate dehydrogenase (357 aa).

Gly-75–Glu-88 contacts NAD(+). Substrate is bound by residues Arg-96, Arg-106, Arg-135, and Asp-224. 3 residues coordinate Mg(2+): Asp-224, Asp-248, and Asp-252. Gly-282–Asn-294 is a binding site for NAD(+).

This sequence belongs to the isocitrate and isopropylmalate dehydrogenases family. LeuB type 1 subfamily. In terms of assembly, homodimer. The cofactor is Mg(2+). Mn(2+) serves as cofactor.

The protein localises to the cytoplasm. The enzyme catalyses (2R,3S)-3-isopropylmalate + NAD(+) = 4-methyl-2-oxopentanoate + CO2 + NADH. Its pathway is amino-acid biosynthesis; L-leucine biosynthesis; L-leucine from 3-methyl-2-oxobutanoate: step 3/4. Functionally, catalyzes the oxidation of 3-carboxy-2-hydroxy-4-methylpentanoate (3-isopropylmalate) to 3-carboxy-4-methyl-2-oxopentanoate. The product decarboxylates to 4-methyl-2 oxopentanoate. The sequence is that of 3-isopropylmalate dehydrogenase from Desulfotalea psychrophila (strain LSv54 / DSM 12343).